A 249-amino-acid chain; its full sequence is tRNA (guanine-N(1)-)-methyltransferase (249 aa).

Residues Gly-116 and 136–141 (IGDYIL) contribute to the S-adenosyl-L-methionine site.

Belongs to the RNA methyltransferase TrmD family. As to quaternary structure, homodimer.

It localises to the cytoplasm. The catalysed reaction is guanosine(37) in tRNA + S-adenosyl-L-methionine = N(1)-methylguanosine(37) in tRNA + S-adenosyl-L-homocysteine + H(+). In terms of biological role, specifically methylates guanosine-37 in various tRNAs. This Zymomonas mobilis subsp. mobilis (strain ATCC 31821 / ZM4 / CP4) protein is tRNA (guanine-N(1)-)-methyltransferase.